The sequence spans 161 residues: Endoribonuclease YbeY (161 aa).

His121, His125, and His131 together coordinate Zn(2+).

Belongs to the endoribonuclease YbeY family. It depends on Zn(2+) as a cofactor.

It is found in the cytoplasm. Single strand-specific metallo-endoribonuclease involved in late-stage 70S ribosome quality control and in maturation of the 3' terminus of the 16S rRNA. This Xanthomonas euvesicatoria pv. vesicatoria (strain 85-10) (Xanthomonas campestris pv. vesicatoria) protein is Endoribonuclease YbeY.